The primary structure comprises 175 residues: Large ribosomal subunit protein uL10 (175 aa).

This sequence belongs to the universal ribosomal protein uL10 family. In terms of assembly, part of the ribosomal stalk of the 50S ribosomal subunit. The N-terminus interacts with L11 and the large rRNA to form the base of the stalk. The C-terminus forms an elongated spine to which L12 dimers bind in a sequential fashion forming a multimeric L10(L12)X complex.

Its function is as follows. Forms part of the ribosomal stalk, playing a central role in the interaction of the ribosome with GTP-bound translation factors. In Methylococcus capsulatus (strain ATCC 33009 / NCIMB 11132 / Bath), this protein is Large ribosomal subunit protein uL10.